Consider the following 312-residue polypeptide: Tetraacyldisaccharide 4'-kinase (312 aa).

60-67 (IAGGSGKT) lines the ATP pocket.

Belongs to the LpxK family.

The catalysed reaction is a lipid A disaccharide + ATP = a lipid IVA + ADP + H(+). It functions in the pathway glycolipid biosynthesis; lipid IV(A) biosynthesis; lipid IV(A) from (3R)-3-hydroxytetradecanoyl-[acyl-carrier-protein] and UDP-N-acetyl-alpha-D-glucosamine: step 6/6. In terms of biological role, transfers the gamma-phosphate of ATP to the 4'-position of a tetraacyldisaccharide 1-phosphate intermediate (termed DS-1-P) to form tetraacyldisaccharide 1,4'-bis-phosphate (lipid IVA). The chain is Tetraacyldisaccharide 4'-kinase from Helicobacter pylori (strain ATCC 700392 / 26695) (Campylobacter pylori).